The primary structure comprises 409 residues: Multifunctional CCA protein (409 aa).

Gly8 and Arg11 together coordinate ATP. Residues Gly8 and Arg11 each contribute to the CTP site. Positions 21 and 23 each coordinate Mg(2+). The ATP site is built by Arg91, Arg137, and Arg140. CTP-binding residues include Arg91, Arg137, and Arg140. The region spanning 228-329 (TGVHTLMVLT…LKALEGLDAF (102 aa)) is the HD domain.

Belongs to the tRNA nucleotidyltransferase/poly(A) polymerase family. Bacterial CCA-adding enzyme type 1 subfamily. Monomer. Can also form homodimers and oligomers. It depends on Mg(2+) as a cofactor. Ni(2+) serves as cofactor.

The enzyme catalyses a tRNA precursor + 2 CTP + ATP = a tRNA with a 3' CCA end + 3 diphosphate. It carries out the reaction a tRNA with a 3' CCA end + 2 CTP + ATP = a tRNA with a 3' CCACCA end + 3 diphosphate. Its function is as follows. Catalyzes the addition and repair of the essential 3'-terminal CCA sequence in tRNAs without using a nucleic acid template. Adds these three nucleotides in the order of C, C, and A to the tRNA nucleotide-73, using CTP and ATP as substrates and producing inorganic pyrophosphate. tRNA 3'-terminal CCA addition is required both for tRNA processing and repair. Also involved in tRNA surveillance by mediating tandem CCA addition to generate a CCACCA at the 3' terminus of unstable tRNAs. While stable tRNAs receive only 3'-terminal CCA, unstable tRNAs are marked with CCACCA and rapidly degraded. The protein is Multifunctional CCA protein of Thioalkalivibrio sulfidiphilus (strain HL-EbGR7).